The following is a 128-amino-acid chain: Large ribosomal subunit protein eL22 (128 aa).

This sequence belongs to the eukaryotic ribosomal protein eL22 family. As to quaternary structure, component of the large ribosomal subunit.

It is found in the cytoplasm. Its function is as follows. Component of the large ribosomal subunit. The ribosome is a large ribonucleoprotein complex responsible for the synthesis of proteins in the cell. The protein is Large ribosomal subunit protein eL22 (rpl22) of Xenopus tropicalis (Western clawed frog).